A 355-amino-acid chain; its full sequence is Phosphoribosylformylglycinamidine cyclo-ligase (355 aa).

Belongs to the AIR synthase family.

The protein localises to the cytoplasm. The catalysed reaction is 2-formamido-N(1)-(5-O-phospho-beta-D-ribosyl)acetamidine + ATP = 5-amino-1-(5-phospho-beta-D-ribosyl)imidazole + ADP + phosphate + H(+). Its pathway is purine metabolism; IMP biosynthesis via de novo pathway; 5-amino-1-(5-phospho-D-ribosyl)imidazole from N(2)-formyl-N(1)-(5-phospho-D-ribosyl)glycinamide: step 2/2. The chain is Phosphoribosylformylglycinamidine cyclo-ligase from Paraburkholderia phymatum (strain DSM 17167 / CIP 108236 / LMG 21445 / STM815) (Burkholderia phymatum).